A 410-amino-acid polypeptide reads, in one-letter code: ATP phosphoribosyltransferase regulatory subunit (410 aa).

Belongs to the class-II aminoacyl-tRNA synthetase family. HisZ subfamily. As to quaternary structure, heteromultimer composed of HisG and HisZ subunits.

It is found in the cytoplasm. The protein operates within amino-acid biosynthesis; L-histidine biosynthesis; L-histidine from 5-phospho-alpha-D-ribose 1-diphosphate: step 1/9. Functionally, required for the first step of histidine biosynthesis. May allow the feedback regulation of ATP phosphoribosyltransferase activity by histidine. The chain is ATP phosphoribosyltransferase regulatory subunit from Synechococcus sp. (strain JA-3-3Ab) (Cyanobacteria bacterium Yellowstone A-Prime).